A 398-amino-acid polypeptide reads, in one-letter code: Stabilizer of axonemal microtubules 2 (398 aa).

6 mn regions span residues 114-126 (STTFQDDFVPQEI), 148-162 (ITSHRLDYIPHQLEL), 248-260 (NSTSHLDYVPYQA), 282-296 (KSIMKEDFPAWESCR), 316-328 (LSTFRSHYVPHEL), and 350-364 (VTMYSVEYTPKRQEI).

It belongs to the FAM154 family.

The protein is Stabilizer of axonemal microtubules 2 (SAXO2) of Homo sapiens (Human).